The sequence spans 153 residues: Protein Smg homolog (153 aa).

It belongs to the Smg family.

In Neisseria gonorrhoeae (strain ATCC 700825 / FA 1090), this protein is Protein Smg homolog.